A 1124-amino-acid polypeptide reads, in one-letter code: Putative DNA mismatch repair protein mutS homolog L359 (1124 aa).

An ATP-binding site is contributed by 779 to 786; sequence SNNWAGKS.

It belongs to the DNA mismatch repair MutS family.

In terms of biological role, may be involved in DNA-mismatch repair. In Acanthamoeba polyphaga (Amoeba), this protein is Putative DNA mismatch repair protein mutS homolog L359.